Reading from the N-terminus, the 313-residue chain is Malate dehydrogenase (313 aa).

Residues 8–13 and Asp-33 each bind NAD(+); that span reads GAGNVG. Substrate contacts are provided by Arg-83 and Arg-89. NAD(+) is bound by residues Asn-96 and 119-121; that span reads ISN. Substrate-binding residues include Asn-121 and Arg-152. His-176 (proton acceptor) is an active-site residue.

The protein belongs to the LDH/MDH superfamily. MDH type 3 family.

The enzyme catalyses (S)-malate + NAD(+) = oxaloacetate + NADH + H(+). Catalyzes the reversible oxidation of malate to oxaloacetate. The chain is Malate dehydrogenase from Parabacteroides distasonis (strain ATCC 8503 / DSM 20701 / CIP 104284 / JCM 5825 / NCTC 11152).